A 441-amino-acid chain; its full sequence is Glutamate-1-semialdehyde 2,1-aminomutase (441 aa).

An N6-(pyridoxal phosphate)lysine modification is found at lysine 276.

Belongs to the class-III pyridoxal-phosphate-dependent aminotransferase family. HemL subfamily. As to quaternary structure, homodimer. Pyridoxal 5'-phosphate is required as a cofactor.

Its subcellular location is the cytoplasm. The catalysed reaction is (S)-4-amino-5-oxopentanoate = 5-aminolevulinate. It participates in porphyrin-containing compound metabolism; protoporphyrin-IX biosynthesis; 5-aminolevulinate from L-glutamyl-tRNA(Glu): step 2/2. The polypeptide is Glutamate-1-semialdehyde 2,1-aminomutase (Rhodococcus jostii (strain RHA1)).